The sequence spans 243 residues: MSGHSKWSTIKRKKAKVDAQRGKIFTRLAREIIVAARQGGGDPESNVRLKAAIQRAKEANVPNENIMRAIQKGTGELGGANYEEIIYEGYGPGGAAVMIEIMTDNRNRTAGEIRHIFARNGGSLGETGCVAWMFEEKGLIVVEKKGSEPDEDSLMLLALEAGADDFKAEEDSYEITTAPGDLQKVRGALEGAGVKIALAEVAMIPQTTVKLEGDDAERMTRLVDALEEHDDVQNVYANYEIED.

It belongs to the TACO1 family.

The protein localises to the cytoplasm. This chain is Probable transcriptional regulatory protein PTH_1024, found in Pelotomaculum thermopropionicum (strain DSM 13744 / JCM 10971 / SI).